A 62-amino-acid polypeptide reads, in one-letter code: Conotoxin Im5.1 (62 aa).

A signal peptide spans 1-19 (MYCLPVFIILLLLISSAPS). Residues 20–48 (TPPQPRNKDRVHLISLLDNHKQILQRDWN) constitute a propeptide that is removed on maturation. Trp60 is subject to Tryptophan amide.

Belongs to the conotoxin T superfamily. Post-translationally, contains 2 disulfide bonds that can be either 'C1-C3, C2-C4' or 'C1-C4, C2-C3', since these disulfide connectivities have been observed for conotoxins with cysteine framework V (for examples, see AC P0DQQ7 and AC P81755). In terms of tissue distribution, expressed by the venom duct.

The protein resides in the secreted. This is Conotoxin Im5.1 from Conus imperialis (Imperial cone).